Reading from the N-terminus, the 257-residue chain is NAD kinase (257 aa).

Catalysis depends on Asp46, which acts as the Proton acceptor. Residues 46-47, His51, 116-117, Asp146, Ala154, 157-162, and Gln218 contribute to the NAD(+) site; these read DG, NE, and TAYNLS.

This sequence belongs to the NAD kinase family. It depends on a divalent metal cation as a cofactor.

It is found in the cytoplasm. It catalyses the reaction NAD(+) + ATP = ADP + NADP(+) + H(+). Involved in the regulation of the intracellular balance of NAD and NADP, and is a key enzyme in the biosynthesis of NADP. Catalyzes specifically the phosphorylation on 2'-hydroxyl of the adenosine moiety of NAD to yield NADP. This is NAD kinase from Rhizobium meliloti (strain 1021) (Ensifer meliloti).